The primary structure comprises 305 residues: Ribonuclease H (305 aa).

The catalysed reaction is Endonucleolytic cleavage to 5'-phosphomonoester.. Plays essential roles in DNA replication by removing the RNA primers from lagging strand fragments. Exhibits 5'to 3' exonuclease activity on either RNA/DNA or DNA/DNA duplexes and endonuclease activity on either flap or fork DNA structures. The sequence is that of Ribonuclease H (rnh) from Enterobacteria phage T4 (Bacteriophage T4).